The following is a 461-amino-acid chain: Serine incorporator 5 (461 aa).

Topologically, residues 1-36 (MSARCCAGQLACCCGSAGCSLCCGCCPKFRQSRTTR) are extracellular. The helical transmembrane segment at 37 to 57 (FMYLFYFILVIALCCVMMTPS) threads the bilayer. The Cytoplasmic segment spans residues 58–90 (VMKQVKDHIPFFEEFCKKTQAGGDACENLVGYS). Residues 91–111 (AVYRVCFGMACFFALFCLLTL) form a helical membrane-spanning segment. Residues 112–125 (KVNNSKSCRAYIHN) lie on the Extracellular side of the membrane. N-linked (GlcNAc...) asparagine glycosylation is present at Asn-114. Residues 126-146 (GFWFFKLLLLGAMCSGAFFIP) traverse the membrane as a helical segment. Residues 147 to 157 (DQETFLKVWRY) are Cytoplasmic-facing. The helical transmembrane segment at 158–178 (VGAGGSFLFICIQLLLIVQFA) threads the bilayer. At 179–200 (HKWNKNWTAGTVRNKLWYASLS) the chain is on the extracellular side. The N-linked (GlcNAc...) asparagine glycan is linked to Asn-184. Residues 201–221 (LVTLIMYSVAVGGLALMAVFY) form a helical membrane-spanning segment. Residues 222 to 231 (TQWDDCMDNK) lie on the Cytoplasmic side of the membrane. Residues 232–252 (ILLGVHGGLCVLISLVAISPC) form a helical membrane-spanning segment. Topologically, residues 253–260 (VQNRQPHS) are extracellular. The chain crosses the membrane as a helical span at residues 261-281 (GLLQSGLISCYVTYLTFSALT). Topologically, residues 282 to 312 (SKPEKKVLDEHGKNVTICAPDFGQDLHRDEN) are cytoplasmic. Residues 313–333 (MVTWLGTLLLIVCISYSCLTS) traverse the membrane as a helical segment. Over 334-392 (TTRSSSDALQSRYGAPELEVARCCFCFGPDGEDTEEQQNVKKGPRVIYDEKKGTVYSYS) the chain is Extracellular. The chain crosses the membrane as a helical span at residues 393–413 (YFHFVFFLASLYVMMTLTSWF). Residues 414-422 (HYENATIKT) lie on the Cytoplasmic side of the membrane. Residues 423 to 443 (FFSGWSVFWVKMASCWMCVLL) form a helical membrane-spanning segment. The Extracellular portion of the chain corresponds to 444–461 (YLQTLVAPLCCPSRQFSV).

This sequence belongs to the TDE1 family.

The protein resides in the cell membrane. It carries out the reaction a 1,2-diacyl-sn-glycero-3-phospho-L-serine(in) = a 1,2-diacyl-sn-glycero-3-phospho-L-serine(out). The catalysed reaction is a 1,2-diacyl-sn-glycero-3-phosphocholine(in) = a 1,2-diacyl-sn-glycero-3-phosphocholine(out). It catalyses the reaction a 1,2-diacyl-sn-glycero-3-phosphoethanolamine(in) = a 1,2-diacyl-sn-glycero-3-phosphoethanolamine(out). Functionally, restriction factor required to restrict infectivity of gammaretroviruses: acts by inhibiting an early step of viral infection. Impairs the penetration of the viral particle into the cytoplasm. Non-ATP-dependent, non-specific lipid transporter for phosphatidylserine, phosphatidylcholine, and phosphatidylethanolamine. Functions as a scramblase that flips lipids in both directions across the membrane. Phospholipid scrambling results in gammaretroviral surface exposure of phosphatidylserine and loss of membrane asymmetry, which leads to loss of infectivity. Enhances the incorporation of serine into phosphatidylserine and sphingolipids. May play a role in providing serine molecules for the formation of myelin glycosphingolipids in oligodendrocytes. The polypeptide is Serine incorporator 5 (Serinc5) (Mus musculus (Mouse)).